Here is a 165-residue protein sequence, read N- to C-terminus: Probable chemoreceptor glutamine deamidase CheD (165 aa).

This sequence belongs to the CheD family.

The enzyme catalyses L-glutaminyl-[protein] + H2O = L-glutamyl-[protein] + NH4(+). Probably deamidates glutamine residues to glutamate on methyl-accepting chemotaxis receptors (MCPs), playing an important role in chemotaxis. This Clostridium tetani (strain Massachusetts / E88) protein is Probable chemoreceptor glutamine deamidase CheD.